We begin with the raw amino-acid sequence, 446 residues long: Tubulin beta-2 chain (446 aa).

GTP-binding residues include Gln11, Glu69, Ser138, Gly142, Thr143, Gly144, Asn204, and Asn226. Residue Glu69 coordinates Mg(2+). Residues 424-446 (QYQEATADEEGEFDEDEEGGGDE) form a disordered region. Acidic residues predominate over residues 429-446 (TADEEGEFDEDEEGGGDE).

It belongs to the tubulin family. In terms of assembly, dimer of alpha and beta chains. A typical microtubule is a hollow water-filled tube with an outer diameter of 25 nm and an inner diameter of 15 nM. Alpha-beta heterodimers associate head-to-tail to form protofilaments running lengthwise along the microtubule wall with the beta-tubulin subunit facing the microtubule plus end conferring a structural polarity. Microtubules usually have 13 protofilaments but different protofilament numbers can be found in some organisms and specialized cells. Requires Mg(2+) as cofactor. Testis specific.

It localises to the cytoplasm. The protein localises to the cytoskeleton. Functionally, tubulin is the major constituent of microtubules, a cylinder consisting of laterally associated linear protofilaments composed of alpha- and beta-tubulin heterodimers. Microtubules grow by the addition of GTP-tubulin dimers to the microtubule end, where a stabilizing cap forms. Below the cap, tubulin dimers are in GDP-bound state, owing to GTPase activity of alpha-tubulin. The polypeptide is Tubulin beta-2 chain (betaTub85D) (Drosophila melanogaster (Fruit fly)).